A 559-amino-acid polypeptide reads, in one-letter code: Coiled-coil domain-containing protein 63 (559 aa).

3 coiled-coil regions span residues 14-70, 185-261, and 364-414; these read ELSE…QAET, EKAA…KLKS, and QQQS…VEKL.

Functionally, plays a role in spermiogenesis. Involved in the elongation of flagella and the formation of sperm heads. The protein is Coiled-coil domain-containing protein 63 of Rattus norvegicus (Rat).